The chain runs to 79 residues: Small ribosomal subunit protein uS17 (79 aa).

Belongs to the universal ribosomal protein uS17 family. Part of the 30S ribosomal subunit.

Its function is as follows. One of the primary rRNA binding proteins, it binds specifically to the 5'-end of 16S ribosomal RNA. The chain is Small ribosomal subunit protein uS17 from Rhizobium etli (strain ATCC 51251 / DSM 11541 / JCM 21823 / NBRC 15573 / CFN 42).